A 118-amino-acid chain; its full sequence is Ribonuclease P protein component (118 aa).

It belongs to the RnpA family. In terms of assembly, consists of a catalytic RNA component (M1 or rnpB) and a protein subunit.

The enzyme catalyses Endonucleolytic cleavage of RNA, removing 5'-extranucleotides from tRNA precursor.. Functionally, RNaseP catalyzes the removal of the 5'-leader sequence from pre-tRNA to produce the mature 5'-terminus. It can also cleave other RNA substrates such as 4.5S RNA. The protein component plays an auxiliary but essential role in vivo by binding to the 5'-leader sequence and broadening the substrate specificity of the ribozyme. This Levilactobacillus brevis (strain ATCC 367 / BCRC 12310 / CIP 105137 / JCM 1170 / LMG 11437 / NCIMB 947 / NCTC 947) (Lactobacillus brevis) protein is Ribonuclease P protein component.